The following is a 484-amino-acid chain: Glycogen synthase (484 aa).

Residue Lys-15 coordinates ADP-alpha-D-glucose.

Belongs to the glycosyltransferase 1 family. Bacterial/plant glycogen synthase subfamily.

It carries out the reaction [(1-&gt;4)-alpha-D-glucosyl](n) + ADP-alpha-D-glucose = [(1-&gt;4)-alpha-D-glucosyl](n+1) + ADP + H(+). The protein operates within glycan biosynthesis; glycogen biosynthesis. Functionally, synthesizes alpha-1,4-glucan chains using ADP-glucose. In Geotalea uraniireducens (strain Rf4) (Geobacter uraniireducens), this protein is Glycogen synthase.